The chain runs to 2485 residues: Polyprotein P1234 (2485 aa).

The Alphavirus-like MT domain maps to 28 to 259 (EAKQVTDNDH…EKRDLLRSWH (232 aa)). A nsP1 membrane-binding region spans residues 244–263 (GSTIYHEKRDLLRSWHLPSV). Cys419 carries the S-palmitoyl cysteine; by host lipid modification. One can recognise a (+)RNA virus helicase ATP-binding domain in the interval 690 to 841 (ELVDPPFHEF…HEICTQVFHK (152 aa)). 721 to 728 (GVPGSGKS) is a binding site for a ribonucleoside 5'-triphosphate. The region spanning 842–990 (SISRRCTKSV…IEEWQAEHDA (149 aa)) is the (+)RNA virus helicase C-terminal domain. A Peptidase C9 domain is found at 1003–1322 (DVFQNKANVC…STLTNIYTGS (320 aa)). A nucleolus localization signal region spans residues 1004–1023 (VFQNKANVCWAKALVPVLKT). The active-site For cysteine protease nsP2 activity is the Cys1012. Positions 1056–1065 (VRFFGLDLDS) match the Nuclear export signal motif. His1081 (for cysteine protease nsP2 activity) is an active-site residue. The Nuclear localization signal motif lies at 1179–1183 (PGKTV). Positions 1328–1489 (GCAPSYHVVR…TLKEAVARRE (162 aa)) constitute a Macro domain. The ADP-D-ribose site is built by Asp1339, Asn1353, Gly1361, Gly1441, Ile1442, and Phe1443. Zn(2+) contacts are provided by Cys1596, Cys1598, Cys1621, and Cys1639. Residues 1783-1810 (PRTVFRNPPQPAPRTRTPSLAPSRASSR) form a disordered region. Residues 1798–1810 (RTPSLAPSRASSR) are compositionally biased toward polar residues. Tandem repeats lie at residues 1810-1831 (RISL…ELEA) and 1844-1865 (RTSL…EFEA). The 2 X 21 AA approximate repeats, binding to host FXR family members stretch occupies residues 1810-1865 (RISLVSNPPGVNRVITREELEALTPSRAPSRSVSRTSLVSNPPGVNRVITREEFEA). Residues 2242–2357 (DCVLETDIAS…KGVKSDKLMA (116 aa)) form the RdRp catalytic domain.

In terms of assembly, interacts with non-structural protein 3. Interacts with RNA-directed RNA polymerase nsP4. Interacts with protease nsP2. interacts with itself. As to quaternary structure, interacts with mRNA-capping enzyme nsP1. Interacts with host DDX1. Interacts with host DDX3. Interacts (via C-terminus) with host FXR1; this interaction inhibits the formation of host stress granules on viral mRNAs and the nsp3-FXR1 complexes bind viral RNAs and probably orchestrate the assembly of viral replication complexes. Interacts (via C-terminus) with host FXR2; this interaction inhibits the formation of host stress granules on viral mRNAs and the nsp3-FXR2 complexes bind viral RNAs and probably orchestrate the assembly of viral replication complexes. Interacts (via C-terminus) with host FMR1; this interaction inhibits the formation of host stress granules on viral mRNAs and the nsp3-FMR1 complexes bind viral RNAs and probably orchestrate the assembly of viral replication complexes. Interacts with mRNA-capping enzyme nsP1. Interacts with protease nsP2. interacts with itself. In terms of assembly, interacts with RNA-directed RNA polymerase nsP4. Interacts with mRNA-capping enzyme nsP1. Interacts with KPNA1/karyopherin-alpha1; this interaction probably allows the active transport of protease nsP2 into the host nucleus. The cofactor is Mg(2+). Requires Mn(2+) as cofactor. In terms of processing, specific enzymatic cleavages in vivo yield mature proteins. The processing of the polyprotein is temporally regulated. In early stages (1.7 hpi), P1234 is first cleaved in trans through its nsP2 protease activity, releasing P123' and nsP4, which associate to form the early replication complex. At the same time, P1234 is also cut at the nsP1/nsP2 site early in infection but with lower efficiency. After replication of the viral minus-strand RNAs (4 hpi), the polyproteins are cut at the nsP1/nsP2 and nsP2/nsP3 sites very efficiently, preventing accumulation of P123' and P1234 and allowing the formation of the late replication complex. NsP3'/nsP4 site is not cleaved anymore and P34 is produced rather than nsP4. Post-translationally, specific enzymatic cleavages in vivo yield mature proteins. The processing of the polyprotein is temporally regulated. In early stages (1.7 hpi), P123 is cleaved at the nsP1/nsP2 site with low efficiency. After replication of the viral minus-strand RNAs (4 hpi), the polyproteins are cut at the nsP1/nsP2 and nsP2/nsP3 sites very efficiently, preventing accumulation of P123 and allowing the formation of the late replication complex. Specific enzymatic cleavages in vivo yield mature proteins. The processing of the polyprotein is temporally regulated. In early stages (1.7 hpi), P123' is cleaved at the nsP1/nsP2 site with low efficiency. After replication of the viral minus-strand RNAs (4 hpi), the polyproteins are cut at the nsP1/nsP2 and nsP2/nsP3 sites very efficiently, preventing accumulation of P123' and allowing the formation of the late replication complex. In terms of processing, palmitoylated by host palmitoyltransferases ZDHHC2 and ZDHHC19. Post-translationally, phosphorylated by host on serines and threonines. Ubiquitinated; targets the protein for rapid degradation via the ubiquitin system. Nsp4 is present in extremely low quantities due to low frequency of translation through the amber stop-codon and the degradation by the ubiquitin pathway.

It localises to the host cytoplasmic vesicle membrane. It is found in the host cell membrane. The protein resides in the host cell projection. The protein localises to the host filopodium. Its subcellular location is the host nucleus. It localises to the host cytoplasm. The catalysed reaction is GTP + S-adenosyl-L-methionine = N(7)-methyl-GTP + S-adenosyl-L-homocysteine. It carries out the reaction N(7)-methyl-GTP + L-histidyl-[protein] = N(tele)-(N(7)-methylguanosine 5'-phospho)-L-histidyl-[protein] + diphosphate. The enzyme catalyses N(tele)-(N(7)-methylguanosine 5'-phospho)-L-histidyl-[protein] + a 5'-end diphospho-(purine-ribonucleoside) in mRNA + H(+) = a 5'-end (N(7)-methyl 5'-triphosphoguanosine)-(purine-ribonucleoside) in mRNA + L-histidyl-[protein]. It catalyses the reaction a 5'-end triphospho-ribonucleoside in mRNA + H2O = a 5'-end diphospho-ribonucleoside in mRNA + phosphate + H(+). The catalysed reaction is a ribonucleoside 5'-triphosphate + H2O = a ribonucleoside 5'-diphosphate + phosphate + H(+). It carries out the reaction ATP + H2O = ADP + phosphate + H(+). The enzyme catalyses RNA(n) + a ribonucleoside 5'-triphosphate = RNA(n+1) + diphosphate. It catalyses the reaction 4-O-(ADP-D-ribosyl)-L-aspartyl-[protein] + H2O = L-aspartyl-[protein] + ADP-D-ribose + H(+). The catalysed reaction is 5-O-(ADP-D-ribosyl)-L-glutamyl-[protein] + H2O = L-glutamyl-[protein] + ADP-D-ribose + H(+). It carries out the reaction RNA(n) + ATP = RNA(n)-3'-adenine ribonucleotide + diphosphate. The enzyme catalyses ADP-alpha-D-ribose 1''-phosphate + H2O = ADP-D-ribose + phosphate. With respect to regulation, inhibited by sinefungin. Its function is as follows. Inactive precursor of the viral replicase, which is activated by cleavages carried out by the viral protease nsP2. Functionally, the early replication complex formed by the polyprotein P123 and nsP4 synthesizes the minus-strand RNAs (antigenome). Polyprotein P123 is a short-lived polyprotein that accumulates during early stage of infection. As soon P123 is cleaved into mature proteins, the plus-strand RNAs synthesis begins. The early replication complex formed by the polyprotein P123' and nsP4 synthesizes minus-strand RNAs (antigenome). Polyprotein P123' is a short-lived polyprotein that accumulates during early stage of infection. As soon P123' is cleaved into mature proteins, the plus-strand RNAs synthesis begins. In terms of biological role, cytoplasmic capping enzyme that catalyzes two virus-specific reactions: methyltransferase and nsP1 guanylyltransferase. mRNA-capping is necessary since all viral RNAs are synthesized in the cytoplasm, and host capping enzymes are restricted to the nucleus. The enzymatic reaction involves a covalent link between 7-methyl-GMP and nsP1, whereas eukaryotic capping enzymes form a covalent complex only with GMP. NsP1 capping consists in the following reactions: GTP is first methylated into 7-methyl-GMP and then is covalently linked to nsP1 to form the m7GMp-nsP1 complex from which 7-methyl-GMP complex is transferred to the mRNA to create the cap structure. NsP1 is also needed for the initiation of the minus-strand RNAs synthesis. Probably serves as a membrane anchor for the replication complex composed of nsP1-nsP4. Nsp1 is needed for the initiation of the minus-strand RNAs synthesis. Palmitoylated nsP1 is remodeling host cell cytoskeleton, and induces filopodium-like structure formation at the surface of the host cell. Its function is as follows. Multifunctional protein whose N-terminus is part of the RNA polymerase complex and displays NTPase, RNA triphosphatase and helicase activities. NTPase and RNA triphosphatase are involved in viral RNA capping and helicase keeps a check on the dsRNA replication intermediates. The C-terminus harbors a protease that specifically cleaves the polyproteins and releases the mature proteins. Required for the shutoff of minus-strand RNAs synthesis. Inhibits host translation to ensure maximal viral gene expression and evade host immune response. Functionally, seems to be essential for minus-strand RNAs and subgenomic 26S mRNAs synthesis. Displays mono-ADP-ribosylhydrolase activity. ADP-ribosylation is a post-translational modification that controls various processes of the host cell and the virus probably needs to revert it for optimal viral replication. Binds proteins of FXR family and sequesters them into the viral RNA replication complexes thereby inhibiting the formation of host stress granules on viral mRNAs. The nsp3-FXR complexes bind viral RNAs and probably orchestrate the assembly of viral replication complexes, thanks to the ability of FXR family members to self-assemble and bind DNA. Seems to be essential for minus-strand RNAs and subgenomic 26S mRNAs synthesis. Displays mono-ADP-ribosylhydrolase activity. ADP-ribosylation is a post-translational modification that controls various processes of the host cell and the virus probably needs to revert it for optimal viral replication. Binds proteins of FXR family and sequesters them into the viral RNA replication complexes thereby inhibiting the formation of host stress granules on viral mRNAs. The nsp3'-FXR complexes bind viral RNAs and probably orchestrate the assembly of viral replication complexes, thanks to the ability of FXR family members to self-assemble and bind DNA. In terms of biological role, RNA dependent RNA polymerase. Replicates genomic and antigenomic RNA by recognizing replications specific signals. The early replication complex formed by the polyprotein P123 and nsP4 synthesizes minus-strand RNAs. The late replication complex composed of fully processed nsP1-nsP4 is responsible for the production of genomic and subgenomic plus-strand RNAs. The polypeptide is Polyprotein P1234 (Venezuelan equine encephalitis virus (strain 3880) (VEEV)).